A 717-amino-acid polypeptide reads, in one-letter code: HHIP-like protein 2 (717 aa).

A signal peptide spans 1–40 (MLGKHTSPHTVPGHRAPWLSPGIFCLGLPFLLGWVGLLQG). 4 cysteine pairs are disulfide-bonded: Cys203-Cys545, Cys207-Cys551, Cys423-Cys441, and Cys508-Cys607. The segment at 642–717 (ARKASNATFT…MRQAAGRSHP (76 aa)) is disordered. Polar residues predominate over residues 646 to 662 (SNATFTSSSDRVASQKG). Asn647 is a glycosylation site (N-linked (GlcNAc...) asparagine). Basic residues predominate over residues 672–687 (SSKKTFRRPGTKKKSR).

This sequence belongs to the HHIP family.

The protein resides in the secreted. The sequence is that of HHIP-like protein 2 (Hhipl2) from Mus musculus (Mouse).